The following is a 227-amino-acid chain: Cytochrome c oxidase subunit 2 (227 aa).

The Mitochondrial intermembrane segment spans residues 1–26 (MATWSNFNLQNSASPLMEQIIFFHDH). A helical membrane pass occupies residues 27–51 (TLVILIMITILVGYLMISLFFNSYI). At 52 to 62 (NRFLLEGQMIE) the chain is on the mitochondrial matrix side. Residues 63–81 (LIWTILPAITLIFIALPSL) form a helical membrane-spanning segment. Residues 82 to 227 (RLLYLLDELN…NFINWINNYS (146 aa)) lie on the Mitochondrial intermembrane side of the membrane. Residues His161, Cys196, Glu198, Cys200, His204, and Met207 each coordinate Cu cation. Glu198 is a Mg(2+) binding site.

It belongs to the cytochrome c oxidase subunit 2 family. As to quaternary structure, component of the cytochrome c oxidase (complex IV, CIV), a multisubunit enzyme composed of a catalytic core of 3 subunits and several supernumerary subunits. The complex exists as a monomer or a dimer and forms supercomplexes (SCs) in the inner mitochondrial membrane with ubiquinol-cytochrome c oxidoreductase (cytochrome b-c1 complex, complex III, CIII). It depends on Cu cation as a cofactor.

The protein localises to the mitochondrion inner membrane. The catalysed reaction is 4 Fe(II)-[cytochrome c] + O2 + 8 H(+)(in) = 4 Fe(III)-[cytochrome c] + 2 H2O + 4 H(+)(out). Functionally, component of the cytochrome c oxidase, the last enzyme in the mitochondrial electron transport chain which drives oxidative phosphorylation. The respiratory chain contains 3 multisubunit complexes succinate dehydrogenase (complex II, CII), ubiquinol-cytochrome c oxidoreductase (cytochrome b-c1 complex, complex III, CIII) and cytochrome c oxidase (complex IV, CIV), that cooperate to transfer electrons derived from NADH and succinate to molecular oxygen, creating an electrochemical gradient over the inner membrane that drives transmembrane transport and the ATP synthase. Cytochrome c oxidase is the component of the respiratory chain that catalyzes the reduction of oxygen to water. Electrons originating from reduced cytochrome c in the intermembrane space (IMS) are transferred via the dinuclear copper A center (CU(A)) of subunit 2 and heme A of subunit 1 to the active site in subunit 1, a binuclear center (BNC) formed by heme A3 and copper B (CU(B)). The BNC reduces molecular oxygen to 2 water molecules using 4 electrons from cytochrome c in the IMS and 4 protons from the mitochondrial matrix. The protein is Cytochrome c oxidase subunit 2 (COII) of Choristoneura fumiferana (Spruce budworm moth).